Reading from the N-terminus, the 336-residue chain is Major histocompatibility complex class I-related protein 1 (336 aa).

A signal peptide spans 1 to 18 (MMLLLPLIIVLMMKLSDA). An alpha-1 region spans residues 19–105 (RTHSLRYFRL…KQLQHHYNHS (87 aa)). Residues 19-197 (RTHSLRYFRL…EYGKDALQRT (179 aa)) form an antigen-binding cleft region. The Extracellular portion of the chain corresponds to 19 to 298 (RTHSLRYFRL…QESETILLVV (280 aa)). Residues tyrosine 25 and arginine 27 each coordinate 8-(9H-purin-6-yl)-2-oxa-8-azabicyclo[3.3.1]nona-3,6-diene-4,6-dicarbaldehyde. 5-(2-oxoethylideneamino)-6-(D-ribitylamino)uracil-binding residues include arginine 27, serine 42, and lysine 61. Arginine 27, serine 42, and lysine 61 together coordinate 5-(2-oxopropylideneamino)-6-(D-ribitylamino)uracil. 3 residues coordinate 7-hydroxy-6-methyl-8-(1-D-ribityl)lumazine: arginine 27, serine 42, and lysine 61. Positions 61 and 76 each coordinate 8-(9H-purin-6-yl)-2-oxa-8-azabicyclo[3.3.1]nona-3,6-diene-4,6-dicarbaldehyde. A 2-amino-4-oxopteridine-6-carbaldehyde-binding site is contributed by lysine 61. A pyridoxal-binding site is contributed by lysine 61. A glycan (N-linked (GlcNAc...) asparagine) is linked at asparagine 103. The segment at 106–197 (GFHTYQRMIG…EYGKDALQRT (92 aa)) is alpha-2. Residue arginine 112 participates in 8-(9H-purin-6-yl)-2-oxa-8-azabicyclo[3.3.1]nona-3,6-diene-4,6-dicarbaldehyde binding. Positions 112, 170, and 171 each coordinate 5-(2-oxoethylideneamino)-6-(D-ribitylamino)uracil. Arginine 112, tyrosine 170, and glutamine 171 together coordinate 5-(2-oxopropylideneamino)-6-(D-ribitylamino)uracil. 7-hydroxy-6-methyl-8-(1-D-ribityl)lumazine-binding residues include arginine 112, tyrosine 170, and glutamine 171. Intrachain disulfides connect cysteine 116/cysteine 179 and cysteine 218/cysteine 274. The alpha-3 stretch occupies residues 198 to 289 (EPPKVRVNHK…GVHMVLQGFQ (92 aa)). Residues 200–295 (PKVRVNHKET…QGFQESETIL (96 aa)) enclose the Ig-like C1-type domain. A connecting peptide region spans residues 290 to 298 (ESETILLVV). The chain crosses the membrane as a helical span at residues 299-319 (KAVGFIVLAIALAGVGILAWR). Topologically, residues 320–336 (KRPRGKNKVICLSTPEH) are cytoplasmic.

It belongs to the MHC class I family. As to quaternary structure, heterotrimer that consists of MR1, B2M and metabolite antigen. Major classes of metabolite ligands presented by MR1 include riboflavin-related antigens, pyrimidines and ribityl lumazines, nucleobase adducts and folate derivatives. Forms reversible covalent Schiff base complexes with microbial pyrimidine-based metabolite, which serves as a molecular switch triggering complete folding, stable association with B2M and translocation of the ternary complex from endoplasmic reticulum to the plasma membrane. Alternatively, forms non-Schiff base complexes with ribityl lumazines. On antigen-presenting cells, the ternary complex interacts with TCR on MR1-restricted T cells. Interacts with TAPBP and TAPBPL chaperones in the endoplasmic reticulum. TAPBP associated or not with MHC class I peptide loading complex binds ligand-free MR1 or MR1-B2M complex, providing for stable MR1 pools ready for metabolite antigen processing. TAPBPL interacts with MR1 in a ligand-independent way; this interaction may stabilize MR1 pool and facilitate ligand loading and dissociation. Structurally, MR1-B2M heterodimer adopts a topology similar to classical MHC class I molecules, with alpha-1 and alpha-2 domains of MR1 forming the antigen-binding cleft composed of two alpha-helices resting on a floor of 7-stranded anti-parallel beta-pleated sheet. MR1-B2M heterodimer (via alpha-helices) interacts with TCR (via CDR domains). N-glycosylated.

The protein localises to the cell membrane. It is found in the endoplasmic reticulum membrane. Its subcellular location is the golgi apparatus membrane. It localises to the early endosome membrane. The protein resides in the late endosome membrane. Antigen-presenting molecule specialized in displaying microbial pyrimidine-based metabolites to alpha-beta T cell receptors (TCR) on innate-type mucosal-associated invariant T (MAIT) cells. In complex with B2M preferentially presents riboflavin-derived metabolites to semi-invariant TCRs on MAIT cells, guiding immune surveillance of the microbial metabolome at mucosal epithelial barriers. Signature pyrimidine-based microbial antigens are generated via non-enzymatic condensation of metabolite intermediates of the riboflavin pathway with by-products arising from other metabolic pathways such as glycolysis. Typical potent antigenic metabolites are 5-(2-oxoethylideneamino)-6-D-ribitylaminouracil (5-OE-RU) and 5-(2-oxopropylideneamino)-6-D-ribitylaminouracil (5-OP-RU), products of condensation of 5-amino-6-D-ribityaminouracil (5-A-RU) with glyoxal or methylglyoxal by-products, respectively. May present microbial antigens to various MAIT cell subsets, providing for unique recognition of diverse microbes, including pathogens that do not synthesize riboflavin. Upon antigen recognition, elicits rapid innate-type MAIT cell activation to eliminate pathogenic microbes by directly killing infected cells. During T cell development, drives thymic selection and post-thymic terminal differentiation of MAIT cells in a process dependent on commensal microflora. Acts as an immune sensor of cancer cell metabolome. May present a tumor-specific or -associated metabolite essential for cancer cell survival to a pan-cancer TCR on a non-MAIT CD8-positive T cell clone, triggering T cell-mediated killing of a wide range of cancer cell types. May present tumor-enriched pyridoxal and pyridoxal 5'-phosphate antigens, enabling preferential recognition of cancer cells. Presents nucleobase carbonyl adducts generated during oxidative stress. Captures M3Ade, a nucleobase adduct composed of one adenine modified by a malondialdehyde trimer, for recognition by MR1-restricted T cell clones expressing a polyclonal TCR repertoire. This is Major histocompatibility complex class I-related protein 1 from Bos taurus (Bovine).